The primary structure comprises 100 residues: MARKSLIQREKKRQKLEQKYYWIRQSLKKEISKVPSLREQWKIHGKLQSSPRNSAPIRLHRRCFLTGRPRANYRDFGLSGHILREMVHACLLPGATRSSW.

It belongs to the universal ribosomal protein uS14 family. Part of the 30S ribosomal subunit.

It is found in the plastid. The protein localises to the chloroplast. In terms of biological role, binds 16S rRNA, required for the assembly of 30S particles. In Phalaenopsis aphrodite subsp. formosana (Moth orchid), this protein is Small ribosomal subunit protein uS14c.